A 130-amino-acid chain; its full sequence is Small ribosomal subunit protein uS11c (130 aa).

It belongs to the universal ribosomal protein uS11 family. As to quaternary structure, part of the 30S ribosomal subunit.

The protein resides in the plastid. It localises to the chloroplast. This Chaetosphaeridium globosum (Charophycean green alga) protein is Small ribosomal subunit protein uS11c.